The sequence spans 81 residues: Exodeoxyribonuclease 7 small subunit (81 aa).

Belongs to the XseB family. Heterooligomer composed of large and small subunits.

It localises to the cytoplasm. The enzyme catalyses Exonucleolytic cleavage in either 5'- to 3'- or 3'- to 5'-direction to yield nucleoside 5'-phosphates.. Its function is as follows. Bidirectionally degrades single-stranded DNA into large acid-insoluble oligonucleotides, which are then degraded further into small acid-soluble oligonucleotides. This is Exodeoxyribonuclease 7 small subunit from Ruegeria sp. (strain TM1040) (Silicibacter sp.).